We begin with the raw amino-acid sequence, 63 residues long: Ct-IT2 (63 aa).

Positions 1–63 constitute an LCN-type CS-alpha/beta domain; the sequence is KDGYPMDSKG…VWDKATNKCG (63 aa). 4 cysteine pairs are disulfide-bonded: Cys11/Cys62, Cys15/Cys36, Cys22/Cys43, and Cys26/Cys45. Gly63 is subject to Glycine amide.

Expressed by the venom gland.

The protein resides in the secreted. In terms of biological role, beta toxins bind voltage-independently at site-4 of sodium channels (Nav) and shift the voltage of activation toward more negative potentials thereby affecting sodium channel activation and promoting spontaneous and repetitive firing. Is highly active on insects, since it provokes paralysis and death when injected into crickets. This is Ct-IT2 from Centruroides tecomanus (Scorpion).